The primary structure comprises 827 residues: MSSKQATSPFACTADGEEAMTQDLTSREKEEGSDQHPASHLPLHPIMHNKPHSEELPTLVSTIQQDADWDSVLSSQQRMESENNKLCSLYSFRNTSTSPHKPDEGSREREIMNSVTFGTPERRKGSLADVVDTLKQKKLEEMTRTEQEDSSCMEKLLSKDWKEKMERLNTSELLGEIKGTPESLAEKERQLSTMITQLISLREQLLAAHDEQKKLAASQIEKQRQQMDLARQQQEQIARQQQQLLQQQHKINLLQQQIQVQGHMPPLMIPIFPHDQRTLAAAAAAQQGFLFPPGITYKPGDNYPVQFIPSTMAAAAASGLSPLQLQKGHVSHPQINPRLKGISDRFGRNLDPSEHGGGHSYNHRQIEQLYAAQLASMQVSPGAKMPSTPQPPNSAGAVSPTGIKNEKRGTSPVTQVKDETTAQPLNLSSRPKTAEPVKSPTSPTQNLFPASKTSPVNLPNKSSIPSPIGGSLGRGSSLDILSSLNSPALFGDQDTVMKAIQEARKMREQIQREQQQQPHGVDGKLSSMNNMGLSNCRTEKERTRFENLGPQLTGKSSEDGKLGPGVIDLTRPEDAEGSKAMNGSAAKLQQYYCWPTGGATVAEARVYRDARGRASSEPHIKRPMNAFMVWAKDERRKILQAFPDMHNSNISKILGSRWKSMSNQEKQPYYEEQARLSKIHLEKYPNYKYKPRPKRTCIVDGKKLRIGEYKQLMRSRRQEMRQFFTVGQQPQMPITTGTGVVYPGAITMATTTPSPQMTSDCSSTSASPEPSLPVIQSTYGMKMDGASLAGNDMINGEDEMEAYDDYEDDPKSDYSSENEAPEPVSAN.

Polar residues predominate over residues Met1–Phe10. The interval Met1–Pro51 is disordered. The span at Thr25–Asp34 shows a compositional bias: basic and acidic residues. Thr119 is modified (phosphothreonine). Residues Leu184 to Gly262 adopt a coiled-coil conformation. Disordered stretches follow at residues Gln334–Tyr361 and Val379–Gly470. Residues Gly341–Gly357 are compositionally biased toward basic and acidic residues. Ser399 carries the phosphoserine modification. Thr401 carries the post-translational modification Phosphothreonine. Residues Lys404 and Lys417 each participate in a glycyl lysine isopeptide (Lys-Gly) (interchain with G-Cter in SUMO) cross-link. Composition is skewed to polar residues over residues Thr421–Pro431 and Ser439–Lys461. Phosphoserine occurs at positions 439 and 442. Residues Ile620 to Lys688 constitute a DNA-binding region (HMG box). Disordered stretches follow at residues Thr752–Leu772 and Ala786–Asn827. Over residues Asn795–Asp808 the composition is skewed to acidic residues.

In terms of assembly, homodimer. Interacts with DAZAP2. May interact with CENPK. In terms of processing, sumoylation inhibits the transcriptional activity. As to expression, highly expressed in testis.

It is found in the nucleus. Its subcellular location is the cytoplasm. Functionally, transcription factor that plays a key role in several developmental processes, including neurogenesis, chondrocytes differentiation and cartilage formation. Specifically binds the 5'-AACAAT-3' DNA motif present in enhancers and super-enhancers and promotes expression of genes important for chondrogenesis. Required for overt chondrogenesis when condensed prechondrocytes differentiate into early stage chondrocytes: SOX5 and SOX6 cooperatively bind with SOX9 on active enhancers and super-enhancers associated with cartilage-specific genes, and thereby potentiate SOX9's ability to transactivate. Not involved in precartilaginous condensation, the first step in chondrogenesis, during which skeletal progenitors differentiate into prechondrocytes. Together with SOX5, required to form and maintain a pool of highly proliferating chondroblasts between epiphyses and metaphyses, to form columnar chondroblasts, delay chondrocyte prehypertrophy but promote hypertrophy, and to delay terminal differentiation of chondrocytes on contact with ossification fronts. Binds to the proximal promoter region of the myelin protein MPZ gene, and is thereby involved in the differentiation of oligodendroglia in the developing spinal tube. Binds to the gene promoter of MBP and acts as a transcriptional repressor. In Mus musculus (Mouse), this protein is Transcription factor SOX-6.